Reading from the N-terminus, the 166-residue chain is Bile acid 7alpha-dehydratase (166 aa).

In terms of assembly, homodimer.

It catalyses the reaction 7alpha,12alpha-dihydroxy-3-oxochol-4-en-24-oyl-CoA = 12alpha-hydroxy-3-oxochola-4,6-dien-24-oyl-CoA + H2O. It carries out the reaction 7alpha-hydroxy-3-oxochol-4-en-24-oyl-CoA = 3-oxochol-4,6-dien-24-oyl-CoA + H2O. The enzyme catalyses 7alpha,12alpha-dihydroxy-3-oxochol-4-en-24-oate = 12alpha-hydroxy-3-oxochola-4,6-dien-24-oate + H2O. The catalysed reaction is 7alpha-hydroxy-3-oxochol-4-en-24-oate = 3-oxochola-4,6-dien-24-oate + H2O. It participates in lipid metabolism; bile acid biosynthesis. Functions in the bile acid 7alpha-dehydroxylation pathway, which forms secondary bile acids via the 7alpha-dehydroxylation of primary bile acids, and is carried out by intestinal anaerobic bacteria. Catalyzes the dehydration step in this pathway, yielding a 3-oxo-Delta(4,6)-bile acid-CoA intermediate. In vitro, can act on the free bile acids (non CoA-conjugated) 7-alpha,12-alpha-dihydroxy-3-oxochol-4-enoate and 7-alpha-hydroxy-3-oxochol-4-enoate, but not on 7-alpha,12-alpha-dihydroxy-3-oxo-5-beta-cholanate, 3-alpha,7-alpha,12-alpha-trihydroxy-5-beta-cholanate or 7-beta-hydroxy-3-oxochol-4-enoate. The polypeptide is Bile acid 7alpha-dehydratase (Clostridium scindens (strain JCM 10418 / VPI 12708)).